The sequence spans 171 residues: Photosystem I assembly protein Ycf3 (171 aa).

3 TPR repeats span residues 33-66, 70-103, and 118-151; these read AFSY…EEDP, SYIL…NSRL, and GTKS…APNN.

This sequence belongs to the Ycf3 family.

It localises to the plastid. Its subcellular location is the chloroplast thylakoid membrane. In terms of biological role, essential for the assembly of the photosystem I (PSI) complex. May act as a chaperone-like factor to guide the assembly of the PSI subunits. In Emiliania huxleyi (Coccolithophore), this protein is Photosystem I assembly protein Ycf3.